A 61-amino-acid polypeptide reads, in one-letter code: Small ribosomal subunit protein uS14 (61 aa).

The Zn(2+) site is built by Cys-24, Cys-27, Cys-40, and Cys-43.

Belongs to the universal ribosomal protein uS14 family. Zinc-binding uS14 subfamily. As to quaternary structure, part of the 30S ribosomal subunit. Contacts proteins S3 and S10. The cofactor is Zn(2+).

Its function is as follows. Binds 16S rRNA, required for the assembly of 30S particles and may also be responsible for determining the conformation of the 16S rRNA at the A site. This chain is Small ribosomal subunit protein uS14, found in Dictyoglomus turgidum (strain DSM 6724 / Z-1310).